The primary structure comprises 295 residues: Beta-chimaerin (295 aa).

Residues 41-91 form a Phorbol-ester/DAG-type zinc finger; that stretch reads THNFKVHTFRGPHWCEYCANFMWGLIAQGVRCSDCGLNVHKQCSKHVPNDC. One can recognise a Rho-GAP domain in the interval 104–295; the sequence is CDLTTLVKAH…ILIENEDVLF (192 aa).

In terms of tissue distribution, found in cerebellum and testis.

It is found in the membrane. Its activity is regulated as follows. In the inactive state, the N terminus protrudes into the active site of the Rho-GAP domain, sterically blocking Rac binding. Phospholipid binding to the Phorbol-ester/DAG-type zinc-finger/C1 domain triggers the cooperative dissociation of these interactions, allowing the N-terminus to move out of the active site and thereby activating the enzyme. GTPase-activating protein for p21-rac. The protein is Beta-chimaerin (Chn2) of Rattus norvegicus (Rat).